A 541-amino-acid chain; its full sequence is Cytochrome P450 monooxygenase claU (541 aa).

The chain crosses the membrane as a helical span at residues 12-32; the sequence is VIDTLVILFSTWAFLGLIRVI. Residue Cys480 coordinates heme.

The protein belongs to the cytochrome P450 family. It depends on heme as a cofactor.

Its subcellular location is the membrane. Its pathway is secondary metabolite biosynthesis; terpenoid biosynthesis. Cytochrome P450 monooxygenase; part of the gene cluster that mediates the biosynthesis of clavilactone A, a meroterpenoid that features a unique benzo-fused ten-membered carbocyclic ring unit with an alpha,beta-epoxy-gamma-lactone moiety, forming an intriguing 10/5/3 tricyclic nested skeleton. Cytochrome P450 monooxygenases claO, claP, claQ, claU, and claW are close orthologs, suggesting that a redundant function or pseudogenes are present in the cla cluster. These monoxygenases are not involved in clavilactone A biosynthesis nor its modification. ClaR, ClaS and ClaT are sufficient to produce clavilactone A. The biosynthesis begins with the prenyltransferase claS that transfers geranyl pyrophosphate (GPP) to hydroquinone to produces geranylhydroquinone. The cytochrome P450 monooxygenase claR then catalyzes the diradical coupling reaction between the intramolecular hydroquinone and allyl moieties to form the benzo-fused ten-membered carbocyclic ring unit of wigantol. Finally the cytochrome P450 monooxygenase claT exquisitely and stereoselectively assembles the alpha,beta-epoxy-gamma-lactone moiety, producing clavilactone A via arnebinol A. The chain is Cytochrome P450 monooxygenase claU from Ampulloclitocybe clavipes (Club foot).